The primary structure comprises 60 residues: Conotoxin Cal6.30 (60 aa).

The first 22 residues, 1 to 22 (MKVTCVLTLAVLILTIGQIANA), serve as a signal peptide directing secretion. Intrachain disulfides connect C31/C47, C38/C51, and C46/C55.

Expressed by the venom duct.

The protein resides in the secreted. Probable neurotoxin. The polypeptide is Conotoxin Cal6.30 (Californiconus californicus (California cone)).